An 885-amino-acid chain; its full sequence is Translation initiation factor IF-2 (885 aa).

Disordered stretches follow at residues 55-150 (IPDK…ADVT) and 269-300 (NTIN…EAVT). Residues 65–146 (EPKAKKEPKK…AEAPKPKESL (82 aa)) show a composition bias toward basic and acidic residues. Residues 281–290 (RRARKKHKKP) are compositionally biased toward basic residues. In terms of domain architecture, tr-type G spans 384 to 553 (PRAPVITIMG…LLQADLLELK (170 aa)). The interval 393-400 (GHVDHGKT) is G1. 393 to 400 (GHVDHGKT) lines the GTP pocket. Residues 418–422 (GITQH) are G2. The interval 439–442 (DTPG) is G3. GTP is bound by residues 439 to 443 (DTPGH) and 493 to 496 (NKMD). Residues 493–496 (NKMD) form a G4 region. Positions 529 to 531 (SAK) are G5.

This sequence belongs to the TRAFAC class translation factor GTPase superfamily. Classic translation factor GTPase family. IF-2 subfamily.

The protein resides in the cytoplasm. One of the essential components for the initiation of protein synthesis. Protects formylmethionyl-tRNA from spontaneous hydrolysis and promotes its binding to the 30S ribosomal subunits. Also involved in the hydrolysis of GTP during the formation of the 70S ribosomal complex. The protein is Translation initiation factor IF-2 of Campylobacter concisus (strain 13826).